The sequence spans 143 residues: Large ribosomal subunit protein uL11 (143 aa).

The protein belongs to the universal ribosomal protein uL11 family. Part of the ribosomal stalk of the 50S ribosomal subunit. Interacts with L10 and the large rRNA to form the base of the stalk. L10 forms an elongated spine to which L12 dimers bind in a sequential fashion forming a multimeric L10(L12)X complex. One or more lysine residues are methylated.

Forms part of the ribosomal stalk which helps the ribosome interact with GTP-bound translation factors. This chain is Large ribosomal subunit protein uL11, found in Rhizobium rhizogenes (strain K84 / ATCC BAA-868) (Agrobacterium radiobacter).